Consider the following 510-residue polypeptide: NAD(P)H-quinone oxidoreductase subunit 2, chloroplastic (510 aa).

Transmembrane regions (helical) follow at residues 24 to 44, 59 to 79, 99 to 119, 124 to 144, 149 to 169, 184 to 204, 229 to 249, 295 to 315, 323 to 343, 347 to 367, 395 to 415, and 418 to 438; these read LLLFHGSFIFPECILIFGLIL, WFYFISSTSLVMSITALLFRW, IFQFLILLCSTLCIPLSVEYI, MAITEFLLFVLTATLGGMFLC, LITIFVAPECFSLCSYLLSGY, LLMGGASSSILVHGFSWLYGL, ISIALISITVGIGFKLSPAPF, WHLLLEILAILSMILGNLIAI, MLAYSSIGQIGYVIIGIIVGD, GYASMITYMLFYISMNLGTFA, ALSLALCLLSLGGLPPLAGFF, and LHLFWCGWQAGLYFLVSIGLL.

The protein belongs to the complex I subunit 2 family. In terms of assembly, NDH is composed of at least 16 different subunits, 5 of which are encoded in the nucleus.

The protein localises to the plastid. It localises to the chloroplast thylakoid membrane. The enzyme catalyses a plastoquinone + NADH + (n+1) H(+)(in) = a plastoquinol + NAD(+) + n H(+)(out). The catalysed reaction is a plastoquinone + NADPH + (n+1) H(+)(in) = a plastoquinol + NADP(+) + n H(+)(out). Its function is as follows. NDH shuttles electrons from NAD(P)H:plastoquinone, via FMN and iron-sulfur (Fe-S) centers, to quinones in the photosynthetic chain and possibly in a chloroplast respiratory chain. The immediate electron acceptor for the enzyme in this species is believed to be plastoquinone. Couples the redox reaction to proton translocation, and thus conserves the redox energy in a proton gradient. This Muilla maritima (Sea muilla) protein is NAD(P)H-quinone oxidoreductase subunit 2, chloroplastic.